Consider the following 306-residue polypeptide: D-alanine--D-alanine ligase (306 aa).

Positions 101–303 (KQVWQAVGLP…FSQLVVKILE (203 aa)) constitute an ATP-grasp domain. 134–189 (FTHLGLPLIVKPSREGSSVGMSKVNTLSDLPAALEEAFRHDDDVLVEKWLSGPEYT) is an ATP binding site. Residues Asp-257, Glu-270, and Asn-272 each contribute to the Mg(2+) site.

This sequence belongs to the D-alanine--D-alanine ligase family. Requires Mg(2+) as cofactor. It depends on Mn(2+) as a cofactor.

The protein localises to the cytoplasm. It carries out the reaction 2 D-alanine + ATP = D-alanyl-D-alanine + ADP + phosphate + H(+). Its pathway is cell wall biogenesis; peptidoglycan biosynthesis. Its function is as follows. Cell wall formation. The chain is D-alanine--D-alanine ligase from Pectobacterium atrosepticum (strain SCRI 1043 / ATCC BAA-672) (Erwinia carotovora subsp. atroseptica).